Reading from the N-terminus, the 119-residue chain is Ribonuclease P protein component (119 aa).

The protein belongs to the RnpA family. Consists of a catalytic RNA component (M1 or rnpB) and a protein subunit.

The catalysed reaction is Endonucleolytic cleavage of RNA, removing 5'-extranucleotides from tRNA precursor.. RNaseP catalyzes the removal of the 5'-leader sequence from pre-tRNA to produce the mature 5'-terminus. It can also cleave other RNA substrates such as 4.5S RNA. The protein component plays an auxiliary but essential role in vivo by binding to the 5'-leader sequence and broadening the substrate specificity of the ribozyme. The polypeptide is Ribonuclease P protein component (Erwinia tasmaniensis (strain DSM 17950 / CFBP 7177 / CIP 109463 / NCPPB 4357 / Et1/99)).